The primary structure comprises 52 residues: Rubredoxin (52 aa).

A Rubredoxin-like domain is found at 1-52 (MKKYVCTVCGYEYDPAEGDPDNGVKPGTSFDDLPADWVCPVCGAPKSEFEAA). Residues Cys6, Cys9, Cys39, and Cys42 each coordinate Fe cation.

Belongs to the rubredoxin family. Fe(3+) is required as a cofactor.

The protein localises to the cytoplasm. Its function is as follows. Rubredoxin is a small nonheme, iron protein lacking acid-labile sulfide. Its single Fe, chelated to 4 Cys, functions as an electron acceptor and may also stabilize the conformation of the molecule. In terms of biological role, electron acceptor for cytoplasmic lactate dehydrogenase. The polypeptide is Rubredoxin (rub) (Nitratidesulfovibrio vulgaris (strain ATCC 29579 / DSM 644 / CCUG 34227 / NCIMB 8303 / VKM B-1760 / Hildenborough) (Desulfovibrio vulgaris)).